We begin with the raw amino-acid sequence, 220 residues long: 7-cyano-7-deazaguanine synthase (220 aa).

F10 to L20 is an ATP binding site. The Zn(2+) site is built by C186, C195, C198, and C201.

It belongs to the QueC family. As to quaternary structure, homodimer. It depends on Zn(2+) as a cofactor.

The enzyme catalyses 7-carboxy-7-deazaguanine + NH4(+) + ATP = 7-cyano-7-deazaguanine + ADP + phosphate + H2O + H(+). It participates in purine metabolism; 7-cyano-7-deazaguanine biosynthesis. Its function is as follows. Catalyzes the ATP-dependent conversion of 7-carboxy-7-deazaguanine (CDG) to 7-cyano-7-deazaguanine (preQ(0)). In Bacillus cereus (strain ATCC 14579 / DSM 31 / CCUG 7414 / JCM 2152 / NBRC 15305 / NCIMB 9373 / NCTC 2599 / NRRL B-3711), this protein is 7-cyano-7-deazaguanine synthase.